Here is a 318-residue protein sequence, read N- to C-terminus: tRNA-cytidine(32) 2-sulfurtransferase (318 aa).

The PP-loop motif signature appears at 65–70 (SGGKDS). [4Fe-4S] cluster-binding residues include Cys140, Cys143, and Cys231.

Belongs to the TtcA family. As to quaternary structure, homodimer. It depends on Mg(2+) as a cofactor. [4Fe-4S] cluster is required as a cofactor.

Its subcellular location is the cytoplasm. It carries out the reaction cytidine(32) in tRNA + S-sulfanyl-L-cysteinyl-[cysteine desulfurase] + AH2 + ATP = 2-thiocytidine(32) in tRNA + L-cysteinyl-[cysteine desulfurase] + A + AMP + diphosphate + H(+). Its pathway is tRNA modification. Catalyzes the ATP-dependent 2-thiolation of cytidine in position 32 of tRNA, to form 2-thiocytidine (s(2)C32). The sulfur atoms are provided by the cysteine/cysteine desulfurase (IscS) system. The protein is tRNA-cytidine(32) 2-sulfurtransferase of Herminiimonas arsenicoxydans.